The primary structure comprises 272 residues: 2-C-methyl-D-erythritol 4-phosphate cytidylyltransferase (272 aa).

This sequence belongs to the IspD/TarI cytidylyltransferase family. IspD subfamily.

The catalysed reaction is 2-C-methyl-D-erythritol 4-phosphate + CTP + H(+) = 4-CDP-2-C-methyl-D-erythritol + diphosphate. It participates in isoprenoid biosynthesis; isopentenyl diphosphate biosynthesis via DXP pathway; isopentenyl diphosphate from 1-deoxy-D-xylulose 5-phosphate: step 2/6. Catalyzes the formation of 4-diphosphocytidyl-2-C-methyl-D-erythritol from CTP and 2-C-methyl-D-erythritol 4-phosphate (MEP). The sequence is that of 2-C-methyl-D-erythritol 4-phosphate cytidylyltransferase from Xanthomonas oryzae pv. oryzae (strain MAFF 311018).